The following is a 171-amino-acid chain: Myosin regulatory light chain 12A (171 aa).

Thr-18 is modified (phosphothreonine; by MLCK). Ser-19 bears the Phosphoserine; by MLCK mark. 3 consecutive EF-hand domains span residues Ser-28 to Asn-63, Asp-97 to Arg-132, and Phe-133 to Asp-168. Ca(2+) contacts are provided by Asp-41, Asn-43, Asp-45, and Asp-52.

In terms of assembly, myosin is a hexamer of 2 heavy chains and 4 light chains. Phosphorylation increases the actin-activated myosin ATPase activity and thereby regulates the contractile activity. It is required to generate the driving force in the migration of the cells but not necessary for localization of myosin-2 at the leading edge.

Myosin regulatory subunit that plays an important role in regulation of both smooth muscle and nonmuscle cell contractile activity via its phosphorylation. Implicated in cytokinesis, receptor capping, and cell locomotion. The chain is Myosin regulatory light chain 12A (MYL12A) from Homo sapiens (Human).